A 347-amino-acid chain; its full sequence is tRNA N6-adenosine threonylcarbamoyltransferase (347 aa).

2 residues coordinate Fe cation: His-115 and His-119. Substrate-binding positions include 137–141, Asp-170, Gly-183, and Asn-281; that span reads LASGG. Asp-309 provides a ligand contact to Fe cation.

This sequence belongs to the KAE1 / TsaD family. It depends on Fe(2+) as a cofactor.

The protein resides in the cytoplasm. It carries out the reaction L-threonylcarbamoyladenylate + adenosine(37) in tRNA = N(6)-L-threonylcarbamoyladenosine(37) in tRNA + AMP + H(+). Required for the formation of a threonylcarbamoyl group on adenosine at position 37 (t(6)A37) in tRNAs that read codons beginning with adenine. Is involved in the transfer of the threonylcarbamoyl moiety of threonylcarbamoyl-AMP (TC-AMP) to the N6 group of A37, together with TsaE and TsaB. TsaD likely plays a direct catalytic role in this reaction. In Methylorubrum populi (strain ATCC BAA-705 / NCIMB 13946 / BJ001) (Methylobacterium populi), this protein is tRNA N6-adenosine threonylcarbamoyltransferase.